The primary structure comprises 104 residues: Large ribosomal subunit protein uL24 (104 aa).

It belongs to the universal ribosomal protein uL24 family. Part of the 50S ribosomal subunit.

In terms of biological role, one of two assembly initiator proteins, it binds directly to the 5'-end of the 23S rRNA, where it nucleates assembly of the 50S subunit. One of the proteins that surrounds the polypeptide exit tunnel on the outside of the subunit. This chain is Large ribosomal subunit protein uL24, found in Bartonella bacilliformis (strain ATCC 35685 / KC583 / Herrer 020/F12,63).